The primary structure comprises 199 residues: Pyridoxine/pyridoxamine 5'-phosphate oxidase (199 aa).

FMN is bound by residues 44–49, 59–60, lysine 66, and glutamine 91; these read RTVLLK and YS. Position 49 (lysine 49) interacts with substrate. Residues tyrosine 109, arginine 113, and serine 117 each coordinate substrate. FMN-binding positions include 126–127 and tryptophan 171; that span reads QS. Residue 177–179 coordinates substrate; the sequence is RLH. Arginine 181 provides a ligand contact to FMN.

The protein belongs to the pyridoxamine 5'-phosphate oxidase family. In terms of assembly, homodimer. FMN serves as cofactor.

The catalysed reaction is pyridoxamine 5'-phosphate + O2 + H2O = pyridoxal 5'-phosphate + H2O2 + NH4(+). It carries out the reaction pyridoxine 5'-phosphate + O2 = pyridoxal 5'-phosphate + H2O2. The protein operates within cofactor metabolism; pyridoxal 5'-phosphate salvage; pyridoxal 5'-phosphate from pyridoxamine 5'-phosphate: step 1/1. It participates in cofactor metabolism; pyridoxal 5'-phosphate salvage; pyridoxal 5'-phosphate from pyridoxine 5'-phosphate: step 1/1. In terms of biological role, catalyzes the oxidation of either pyridoxine 5'-phosphate (PNP) or pyridoxamine 5'-phosphate (PMP) into pyridoxal 5'-phosphate (PLP). In Xanthomonas oryzae pv. oryzae (strain KACC10331 / KXO85), this protein is Pyridoxine/pyridoxamine 5'-phosphate oxidase.